The following is a 464-amino-acid chain: Desmin (464 aa).

S2 is subject to Blocked amino end (Ser). The tract at residues 2 to 100 is head; sequence SQSYSSSQRV…QEFLQTRTNE (99 aa). Phosphoserine; by CDK1 is present on residues S7 and S23. Residue T65 is modified to Phosphothreonine; by CDK1. The IF rod domain maps to 100-408; sequence EKVELQELND…KLLEGEENRI (309 aa). The tract at residues 101–133 is coil 1A; the sequence is KVELQELNDRFANYIEKVRFLEQQNALMVAEVN. The linker 1 stretch occupies residues 134-143; it reads RLRGKEPTRV. Positions 144-244 are coil 1B; sequence AEMYEEELRE…HEEEIRELQA (101 aa). The linker 12 stretch occupies residues 245 to 260; sequence QLQEQHIQVEMDISKP. The coil 2A stretch occupies residues 261-279; sequence DLTAALRDIRAQYESIAAK. The linker 2 stretch occupies residues 280 to 287; sequence NIAEAEEW. Residues 288 to 404 form a coil 2B region; it reads YKSKVSDLTQ…ATYRKLLEGE (117 aa). The tail stretch occupies residues 405–464; that stretch reads ENRISIPMHQTFASALNFRETSPDQRGSEVHTKKTVMIKTIETRDGEVVSEATQQQHEVL.

It belongs to the intermediate filament family. Homomer.

It localises to the cytoplasm. It is found in the myofibril. Its subcellular location is the sarcomere. The protein resides in the z line. The protein localises to the cell membrane. It localises to the sarcolemma. Its function is as follows. Muscle-specific type III intermediate filament essential for proper muscular structure and function. Plays a crucial role in maintaining the structure of sarcomeres, inter-connecting the Z-disks and forming the myofibrils, linking them not only to the sarcolemmal cytoskeleton, but also to the nucleus and mitochondria, thus providing strength for the muscle fiber during activity. In adult striated muscle they form a fibrous network connecting myofibrils to each other and to the plasma membrane from the periphery of the Z-line structures. The polypeptide is Desmin (DES) (Gallus gallus (Chicken)).